A 504-amino-acid polypeptide reads, in one-letter code: Pre-mRNA-processing factor 19 (504 aa).

At Ser2 the chain carries N-acetylserine. One can recognise a U-box domain in the interval 2 to 73 (SLICSISNEV…KPPSATSIPA (72 aa)). The interval 68 to 223 (ATSIPAILKA…VGLHSASIPG (156 aa)) is may mediate interaction with PSMC5. Residues Lys122, Lys179, Lys244, and Lys261 each carry the N6-acetyllysine modification. One copy of the WD 1 repeat lies at 219–259 (ASIPGILALDLCPSDTNKILTGGADKNVVVFDKSSEQILAT). WD repeat units follow at residues 262–301 (GHTK…CVQV), 304–345 (AHES…TKVT), 348–387 (TSGC…NVAN), 390–429 (GHSG…NFKT), 433–472 (DNNF…LHFT), and 473–503 (EHSG…KFYS).

This sequence belongs to the WD repeat PRP19 family. As to quaternary structure, homotetramer. Component of activated, catalytic and post-catalytic spliceosomes. Component of the Prp19 complex/PRP19C/Nineteen complex/NTC and related complexes described as PRP19-CDC5L splicing complex and PSO4 complex. A homotetramer of PRPF19, CDC5L, PLRG1 and BCAS2 constitute the core of those complexes. The interaction with CDC5L, PLRG1 and BCAS2 is direct within this core complex. At least three less stably associated proteins CTNNBL1, CWC15 and HSPA8 are found in the Prp19 complex. The Prp19 complex associates with the spliceosome during its assembly and remodeling recruiting additional proteins. Component of the XAB2 complex, a multimeric protein complex composed of XAB2, PRPF19, AQR, ZNF830, ISY1, and PPIE. Interacts with CWC22 and EIF4A3 in an RNA-independent manner. Interacts with RPA1 and RPA2; the PRP19-CDC5L complex is recruited to the sites of DNA repair where it interacts with the replication protein A complex (RPA). Interacts with SETMAR; required for SETMAR recruitment to site of DNA damage. Interacts with U2AF2; the interaction is direct and recruits the Prp19 complex to RNA polymerase II C-terminal domain (CTD) and the pre-mRNA. Interacts with PRPF3. Interacts with APEX1, DNTT and PSMB4. Interacts with PSMC5. Interacts with KNSTRN. Interacts (via N-terminus) with CDC5L. Interacts with KHDC4. Interacts with USB1. Interacts with DDX41.

Its subcellular location is the nucleus. It is found in the nucleoplasm. The protein localises to the cytoplasm. It localises to the cytoskeleton. The protein resides in the spindle. Its subcellular location is the lipid droplet. The catalysed reaction is S-ubiquitinyl-[E2 ubiquitin-conjugating enzyme]-L-cysteine + [acceptor protein]-L-lysine = [E2 ubiquitin-conjugating enzyme]-L-cysteine + N(6)-ubiquitinyl-[acceptor protein]-L-lysine.. It participates in protein modification; protein ubiquitination. In terms of biological role, ubiquitin-protein ligase which is a core component of several complexes mainly involved pre-mRNA splicing and DNA repair. Required for pre-mRNA splicing as component of the spliceosome. Core component of the PRP19C/Prp19 complex/NTC/Nineteen complex which is part of the spliceosome and participates in its assembly, its remodeling and is required for its activity. During assembly of the spliceosome, mediates 'Lys-63'-linked polyubiquitination of the U4 spliceosomal protein PRPF3. Ubiquitination of PRPF3 allows its recognition by the U5 component PRPF8 and stabilizes the U4/U5/U6 tri-snRNP spliceosomal complex. Recruited to RNA polymerase II C-terminal domain (CTD) and the pre-mRNA, it may also couple the transcriptional and spliceosomal machineries. The XAB2 complex, which contains PRPF19, is also involved in pre-mRNA splicing, transcription and transcription-coupled repair. Beside its role in pre-mRNA splicing PRPF19, as part of the PRP19-CDC5L complex, plays a role in the DNA damage response/DDR. It is recruited to the sites of DNA damage by the RPA complex where PRPF19 directly ubiquitinates RPA1 and RPA2. 'Lys-63'-linked polyubiquitination of the RPA complex allows the recruitment of the ATR-ATRIP complex and the activation of ATR, a master regulator of the DNA damage response. May also play a role in DNA double-strand break (DSB) repair by recruiting the repair factor SETMAR to altered DNA. As part of the PSO4 complex may also be involved in the DNA interstrand cross-links/ICLs repair process. In addition, may also mediate 'Lys-48'-linked polyubiquitination of substrates and play a role in proteasomal degradation. May play a role in the biogenesis of lipid droplets. May play a role in neural differentiation possibly through its function as part of the spliceosome. This Bos taurus (Bovine) protein is Pre-mRNA-processing factor 19 (PRPF19).